Consider the following 300-residue polypeptide: Protoheme IX farnesyltransferase (300 aa).

9 consecutive transmembrane segments (helical) span residues 21-43, 45-65, 94-114, 117-137, 145-167, 171-193, 213-233, 235-255, and 272-292; these read PRVVELLLLTTVPTMILAQRGVP, PLSVLSVLLGGAMSAGAAGAF, ASLIFAWMLCVISVLWFLLFV, LSALLSAIAVFLYAFFYSIVL, IVWGGLAGCMPVLIAWAAVTGSI, AIVLFAVVFLWTPPHYWPLSIHY, LVVLQVLLYAFAVVACTLLLI, VAHMTPLYGLFSAVLGAWFVY, and AMHIFSLSNTYLSLVFLSVGI.

Belongs to the UbiA prenyltransferase family. Protoheme IX farnesyltransferase subfamily.

It localises to the cell membrane. The enzyme catalyses heme b + (2E,6E)-farnesyl diphosphate + H2O = Fe(II)-heme o + diphosphate. It participates in porphyrin-containing compound metabolism; heme O biosynthesis; heme O from protoheme: step 1/1. Its function is as follows. Converts heme B (protoheme IX) to heme O by substitution of the vinyl group on carbon 2 of heme B porphyrin ring with a hydroxyethyl farnesyl side group. This is Protoheme IX farnesyltransferase from Tropheryma whipplei (strain TW08/27) (Whipple's bacillus).